A 100-amino-acid polypeptide reads, in one-letter code: Small ribosomal subunit protein uS14c (100 aa).

Belongs to the universal ribosomal protein uS14 family. In terms of assembly, part of the 30S ribosomal subunit.

It is found in the plastid. The protein resides in the chloroplast. In terms of biological role, binds 16S rRNA, required for the assembly of 30S particles. The polypeptide is Small ribosomal subunit protein uS14c (Cycas taitungensis (Prince sago)).